The sequence spans 322 residues: Tetraacyldisaccharide 4'-kinase (322 aa).

Position 54-61 (Ser-54–Thr-61) interacts with ATP.

It belongs to the LpxK family.

The catalysed reaction is a lipid A disaccharide + ATP = a lipid IVA + ADP + H(+). It functions in the pathway glycolipid biosynthesis; lipid IV(A) biosynthesis; lipid IV(A) from (3R)-3-hydroxytetradecanoyl-[acyl-carrier-protein] and UDP-N-acetyl-alpha-D-glucosamine: step 6/6. Transfers the gamma-phosphate of ATP to the 4'-position of a tetraacyldisaccharide 1-phosphate intermediate (termed DS-1-P) to form tetraacyldisaccharide 1,4'-bis-phosphate (lipid IVA). The polypeptide is Tetraacyldisaccharide 4'-kinase (Francisella tularensis subsp. holarctica (strain FTNF002-00 / FTA)).